Here is a 412-residue protein sequence, read N- to C-terminus: tRNA N6-adenosine threonylcarbamoyltransferase, mitochondrial (412 aa).

The N-terminal 78 residues, 1-78 (MLCLVYNSIL…IICLNTHRTI (78 aa)), are a transit peptide targeting the mitochondrion. Histidine 157 and histidine 161 together coordinate a divalent metal cation. Substrate contacts are provided by residues 179-183 (LVSGG), aspartate 212, alanine 228, glutamate 232, 328-329 (RN), and serine 363. Aspartate 364 contacts a divalent metal cation.

Belongs to the KAE1 / TsaD family. In terms of assembly, homodimer. The cofactor is a divalent metal cation.

The protein resides in the mitochondrion. It carries out the reaction L-threonylcarbamoyladenylate + adenosine(37) in tRNA = N(6)-L-threonylcarbamoyladenosine(37) in tRNA + AMP + H(+). Required for the formation of a threonylcarbamoyl group on adenosine at position 37 (t(6)A37) in mitochondrial tRNAs that read codons beginning with adenine. Probably involved in the transfer of the threonylcarbamoyl moiety of threonylcarbamoyl-AMP (TC-AMP) to the N6 group of A37. Involved in mitochondrial genome maintenance. The protein is tRNA N6-adenosine threonylcarbamoyltransferase, mitochondrial (pgp1) of Schizosaccharomyces pombe (strain 972 / ATCC 24843) (Fission yeast).